The following is an 833-amino-acid chain: Multiphosphoryl transfer protein 2 (833 aa).

The HPr domain occupies 2–91; it reads ALIVEFICEL…QWLRDEFPHC (90 aa). The active-site Tele-phosphohistidine intermediate; for HPr activity is histidine 16. Residue histidine 16 is modified to Phosphohistidine; by EI. The interval 143–653 is PTS EI; sequence LGNLPAAKGV…AAKARMAQLD (511 aa). Catalysis depends on histidine 301, which acts as the Tele-phosphohistidine intermediate; for PTS EI activity. Histidine 301 carries the phosphohistidine; by autocatalysis modification. Positions 408 and 444 each coordinate phosphoenolpyruvate. Mg(2+) contacts are provided by glutamate 543 and aspartate 567. Phosphoenolpyruvate contacts are provided by residues 566 to 567 and arginine 577; that span reads ND. The active-site Proton donor; for EI activity is cysteine 614. One can recognise a PTS EIIA type-2 domain in the interval 688–830; that stretch reads PLVTAECITL…DAIASLLQHE (143 aa). Residue histidine 750 is the Tele-phosphohistidine intermediate; for PTS EIIA activity of the active site. At histidine 750 the chain carries Phosphohistidine; by HPr.

Belongs to the PEP-utilizing enzyme family. Requires Mg(2+) as cofactor.

It is found in the cytoplasm. It catalyses the reaction L-histidyl-[protein] + phosphoenolpyruvate = N(pros)-phospho-L-histidyl-[protein] + pyruvate. It carries out the reaction D-fructose(out) + N(pros)-phospho-L-histidyl-[protein] = D-fructose 1-phosphate(in) + L-histidyl-[protein]. Functionally, multifunctional protein that includes general (non sugar-specific) and sugar-specific components of the phosphoenolpyruvate-dependent sugar phosphotransferase system (sugar PTS). This major carbohydrate active transport system catalyzes the phosphorylation of incoming sugar substrates concomitantly with their translocation across the cell membrane. The enzyme II FrwABC PTS system is involved in fructose transport. In Escherichia coli (strain K12), this protein is Multiphosphoryl transfer protein 2.